The following is a 219-amino-acid chain: 7-cyano-7-deazaguanine synthase (219 aa).

Residue 10–20 (FSGGQDSTTCL) coordinates ATP. Residues cysteine 188, cysteine 196, cysteine 199, and cysteine 202 each coordinate Zn(2+).

The protein belongs to the QueC family. Requires Zn(2+) as cofactor.

It carries out the reaction 7-carboxy-7-deazaguanine + NH4(+) + ATP = 7-cyano-7-deazaguanine + ADP + phosphate + H2O + H(+). It participates in purine metabolism; 7-cyano-7-deazaguanine biosynthesis. In terms of biological role, catalyzes the ATP-dependent conversion of 7-carboxy-7-deazaguanine (CDG) to 7-cyano-7-deazaguanine (preQ(0)). The sequence is that of 7-cyano-7-deazaguanine synthase from Neisseria gonorrhoeae (strain NCCP11945).